The sequence spans 66 residues: Large ribosomal subunit protein bL35 (66 aa).

Positions 18-27 (ATGKIKSTQS) are enriched in polar residues. A disordered region spans residues 18-41 (ATGKIKSTQSAKRHGMTKRSKRSI). Positions 28–41 (AKRHGMTKRSKRSI) are enriched in basic residues.

This sequence belongs to the bacterial ribosomal protein bL35 family.

The sequence is that of Large ribosomal subunit protein bL35 from Ehrlichia ruminantium (strain Gardel).